The sequence spans 431 residues: Glutamyl-tRNA reductase (431 aa).

Residues 49 to 52, Ser109, 114 to 116, and Gln120 each bind substrate; these read TCNR and EGQ. Cys50 serves as the catalytic Nucleophile. 189–194 contributes to the NADP(+) binding site; that stretch reads GAGKMA.

Belongs to the glutamyl-tRNA reductase family. Homodimer.

The catalysed reaction is (S)-4-amino-5-oxopentanoate + tRNA(Glu) + NADP(+) = L-glutamyl-tRNA(Glu) + NADPH + H(+). The protein operates within porphyrin-containing compound metabolism; protoporphyrin-IX biosynthesis; 5-aminolevulinate from L-glutamyl-tRNA(Glu): step 1/2. It functions in the pathway porphyrin-containing compound metabolism; chlorophyll biosynthesis. In terms of biological role, catalyzes the NADPH-dependent reduction of glutamyl-tRNA(Glu) to glutamate 1-semialdehyde (GSA). This Synechococcus sp. (strain JA-3-3Ab) (Cyanobacteria bacterium Yellowstone A-Prime) protein is Glutamyl-tRNA reductase.